Here is a 155-residue protein sequence, read N- to C-terminus: Anaerobic ribonucleoside-triphosphate reductase-activating protein (155 aa).

The [4Fe-4S] cluster site is built by Cys-26, Cys-30, and Cys-33. Residues 32 to 34 (GCY) and Gly-74 each bind S-adenosyl-L-methionine.

Belongs to the organic radical-activating enzymes family. In terms of assembly, forms a tetramer composed of two NrdD and two NrdG subunits. It depends on [4Fe-4S] cluster as a cofactor.

The protein localises to the cytoplasm. It carries out the reaction glycyl-[protein] + reduced [flavodoxin] + S-adenosyl-L-methionine = glycin-2-yl radical-[protein] + semiquinone [flavodoxin] + 5'-deoxyadenosine + L-methionine + H(+). Activation of anaerobic ribonucleoside-triphosphate reductase under anaerobic conditions by generation of an organic free radical, using S-adenosylmethionine and reduced flavodoxin as cosubstrates to produce 5'-deoxy-adenosine. The polypeptide is Anaerobic ribonucleoside-triphosphate reductase-activating protein (nrdG) (Vibrio cholerae serotype O1 (strain ATCC 39315 / El Tor Inaba N16961)).